The chain runs to 1025 residues: Dihydropyrimidine dehydrogenase [NADP(+)] (1025 aa).

The propeptide occupies 1–3; the sequence is MAP. The 32-residue stretch at 69–100 folds into the 4Fe-4S ferredoxin-type 1 domain; sequence ERGALREAMRCLKCADAPCQKSCPTHLDIKSF. [4Fe-4S] cluster is bound by residues cysteine 79, cysteine 82, cysteine 87, and cysteine 91. Position 129 (valine 129) interacts with FAD. Cysteine 130, cysteine 136, cysteine 140, and glutamine 156 together coordinate [4Fe-4S] cluster. FAD-binding positions include 194 to 198, 218 to 226, arginine 235, and leucine 261; these read GAGPA and EKQEYVGGL. NADP(+) is bound by residues 340 to 343, 364 to 365, and arginine 371; these read AGDT and RK. Lysine 384 is subject to N6-acetyllysine. Residues 437 to 439 and 481 to 487 contribute to the NADP(+) site; these read AFG and DIVGMAN. Residue 480–489 coordinates FAD; it reads GDIVGMANTT. Residues serine 550 and 574 to 575 each bind FMN; that span reads KT. Substrate-binding positions include asparagine 609 and 668–670; that span reads NLS. The active-site Proton acceptor is cysteine 671. An FMN-binding site is contributed by lysine 709. Position 736-737 (736-737) interacts with substrate; that stretch reads NT. FMN-binding positions include glycine 767, 793–795, and 816–817; these read TGG and CS. 4Fe-4S ferredoxin-type domains lie at 944–976 and 978–1007; these read VVAVIDEEMCINCGKCYMTCNDSGYQAIQFDPE and HLPTVTDTCTGCTLCLSVCPIIDCIRMVSR. Residues cysteine 953, cysteine 956, cysteine 959, cysteine 963, cysteine 986, cysteine 989, cysteine 992, and cysteine 996 each coordinate [4Fe-4S] cluster.

Belongs to the dihydropyrimidine dehydrogenase family. In terms of assembly, homodimer. It depends on FAD as a cofactor. FMN serves as cofactor. Requires [4Fe-4S] cluster as cofactor.

The protein resides in the cytoplasm. The enzyme catalyses 5,6-dihydrouracil + NADP(+) = uracil + NADPH + H(+). The catalysed reaction is 5,6-dihydrothymine + NADP(+) = thymine + NADPH + H(+). Its pathway is amino-acid biosynthesis; beta-alanine biosynthesis. Inactivated by 5-iodouracil. Involved in pyrimidine base degradation. Catalyzes the reduction of uracil and thymine. The chain is Dihydropyrimidine dehydrogenase [NADP(+)] (DPYD) from Sus scrofa (Pig).